A 341-amino-acid chain; its full sequence is Protein YIPF3 (341 aa).

Topologically, residues 1 to 146 (MANSSGSSRN…PVKMISFPQK (146 aa)) are cytoplasmic. Positions 26–46 (GGGAAVIDMENMDDTSGSSFE) are disordered. The helical transmembrane segment at 147–167 (IAGELYGPLMLVFTMVAILLH) threads the bilayer. The Lumenal segment spans residues 168-185 (GMKSSGTIIREGTLMGTA). Residues 186–206 (IGTCFGYWLGVSSFIYFLAYL) form a helical membrane-spanning segment. Over 207–212 (CNAQIT) the chain is Cytoplasmic. A helical membrane pass occupies residues 213–233 (MLQTLSLLGYGLFGHCIVLFI). The Lumenal segment spans residues 234–242 (TYNIHFHSL). Residues 243 to 263 (FYIFWLCIGGLSTLRMVAVLL) form a helical membrane-spanning segment. The Cytoplasmic portion of the chain corresponds to 264–272 (SRTVGHTQR). The helical transmembrane segment at 273–293 (LIVCGTMAALHMLFLLYLHFA) threads the bilayer. The Lumenal portion of the chain corresponds to 294–341 (YHKVVEGILDTLDGQNVPLPIQRVARDLPVGPNTVLNATVQVLLAHSR). Asparagine 330 is a glycosylation site (N-linked (GlcNAc...) asparagine).

This sequence belongs to the YIP1 family.

Its subcellular location is the cell membrane. The protein resides in the golgi apparatus. It localises to the cis-Golgi network membrane. It is found in the cytoplasm. Functionally, involved in the maintenance of the Golgi structure. May play a role in hematopoiesis. This chain is Protein YIPF3 (yipf3), found in Xenopus laevis (African clawed frog).